The primary structure comprises 1396 residues: Sterol 3-beta-glucosyltransferase (1396 aa).

Basic and acidic residues predominate over residues Met-1–Leu-16. 4 disordered regions span residues Met-1–Gln-21, Asp-40–Met-64, Ala-83–Pro-196, and Glu-209–Gln-232. The span at Glu-94–Phe-107 shows a compositional bias: basic and acidic residues. Positions Arg-186 to Pro-196 are enriched in low complexity. The GRAM 1 domain occupies Arg-238 to Thr-273. The 100-residue stretch at Arg-289 to Phe-388 folds into the PH domain. Disordered stretches follow at residues Gly-460–Ser-532 and Thr-571–Asp-627. 2 stretches are compositionally biased toward polar residues: residues Gly-484–Ser-532 and Thr-571–Arg-584. The segment covering Arg-588–Leu-602 has biased composition (basic and acidic residues). The region spanning Glu-717–Lys-783 is the GRAM 2 domain. The UDP-alpha-D-glucose site is built by Ser-905, Arg-906, Asp-908, Ala-1208, His-1210, His-1223, Gly-1227, Thr-1228, Asp-1247, and Gln-1248. Residues Ser-1324–Gln-1343 show a composition bias toward low complexity. The tract at residues Ser-1324–Asn-1346 is disordered.

Belongs to the glycosyltransferase 28 family.

Its subcellular location is the cytoplasm. The protein localises to the preautophagosomal structure membrane. The catalysed reaction is a sterol + UDP-alpha-D-glucose = a sterol 3-beta-D-glucoside + UDP + H(+). The enzyme catalyses ergosterol + UDP-alpha-D-glucose = ergosteryl 3-beta-D-glucoside + UDP + H(+). Its function is as follows. Sterol glycosyltransferase responsible for the glycosylation of ergosterol to form ergosterol-glucoside. This Emericella nidulans (strain FGSC A4 / ATCC 38163 / CBS 112.46 / NRRL 194 / M139) (Aspergillus nidulans) protein is Sterol 3-beta-glucosyltransferase.